Here is a 54-residue protein sequence, read N- to C-terminus: Large ribosomal subunit protein bL33 (54 aa).

This sequence belongs to the bacterial ribosomal protein bL33 family.

The polypeptide is Large ribosomal subunit protein bL33 (Roseiflexus castenholzii (strain DSM 13941 / HLO8)).